We begin with the raw amino-acid sequence, 415 residues long: Putative competence-damage inducible protein (415 aa).

This sequence belongs to the CinA family.

The polypeptide is Putative competence-damage inducible protein (Listeria innocua serovar 6a (strain ATCC BAA-680 / CLIP 11262)).